The following is a 251-amino-acid chain: Hydroxyacylglutathione hydrolase (251 aa).

Zn(2+) contacts are provided by histidine 53, histidine 55, aspartate 57, histidine 58, histidine 110, aspartate 127, and histidine 165.

This sequence belongs to the metallo-beta-lactamase superfamily. Glyoxalase II family. In terms of assembly, monomer. The cofactor is Zn(2+).

The catalysed reaction is an S-(2-hydroxyacyl)glutathione + H2O = a 2-hydroxy carboxylate + glutathione + H(+). Its pathway is secondary metabolite metabolism; methylglyoxal degradation; (R)-lactate from methylglyoxal: step 2/2. In terms of biological role, thiolesterase that catalyzes the hydrolysis of S-D-lactoyl-glutathione to form glutathione and D-lactic acid. The polypeptide is Hydroxyacylglutathione hydrolase (Buchnera aphidicola subsp. Acyrthosiphon pisum (strain APS) (Acyrthosiphon pisum symbiotic bacterium)).